The sequence spans 154 residues: Crossover junction endodeoxyribonuclease RuvC (154 aa).

Catalysis depends on residues Asp7, Glu67, and Asp139. Positions 7, 67, and 139 each coordinate Mg(2+).

The protein belongs to the RuvC family. Homodimer which binds Holliday junction (HJ) DNA. The HJ becomes 2-fold symmetrical on binding to RuvC with unstacked arms; it has a different conformation from HJ DNA in complex with RuvA. In the full resolvosome a probable DNA-RuvA(4)-RuvB(12)-RuvC(2) complex forms which resolves the HJ. Mg(2+) serves as cofactor.

Its subcellular location is the cytoplasm. It carries out the reaction Endonucleolytic cleavage at a junction such as a reciprocal single-stranded crossover between two homologous DNA duplexes (Holliday junction).. The RuvA-RuvB-RuvC complex processes Holliday junction (HJ) DNA during genetic recombination and DNA repair. Endonuclease that resolves HJ intermediates. Cleaves cruciform DNA by making single-stranded nicks across the HJ at symmetrical positions within the homologous arms, yielding a 5'-phosphate and a 3'-hydroxyl group; requires a central core of homology in the junction. The consensus cleavage sequence is 5'-(A/T)TT(C/G)-3'. Cleavage occurs on the 3'-side of the TT dinucleotide at the point of strand exchange. HJ branch migration catalyzed by RuvA-RuvB allows RuvC to scan DNA until it finds its consensus sequence, where it cleaves and resolves the cruciform DNA. The polypeptide is Crossover junction endodeoxyribonuclease RuvC (Prochlorococcus marinus (strain NATL1A)).